The sequence spans 471 residues: UDP-N-acetylmuramoylalanine--D-glutamate ligase (471 aa).

Position 122–128 (122–128 (GSNAKST)) interacts with ATP.

Belongs to the MurCDEF family.

It localises to the cytoplasm. It catalyses the reaction UDP-N-acetyl-alpha-D-muramoyl-L-alanine + D-glutamate + ATP = UDP-N-acetyl-alpha-D-muramoyl-L-alanyl-D-glutamate + ADP + phosphate + H(+). Its pathway is cell wall biogenesis; peptidoglycan biosynthesis. Its function is as follows. Cell wall formation. Catalyzes the addition of glutamate to the nucleotide precursor UDP-N-acetylmuramoyl-L-alanine (UMA). In Psychrobacter cryohalolentis (strain ATCC BAA-1226 / DSM 17306 / VKM B-2378 / K5), this protein is UDP-N-acetylmuramoylalanine--D-glutamate ligase.